Reading from the N-terminus, the 384-residue chain is S-adenosylmethionine synthase (384 aa).

H15 provides a ligand contact to ATP. D17 contacts Mg(2+). E43 is a K(+) binding site. 2 residues coordinate L-methionine: E56 and Q99. The interval Q99–K109 is flexible loop. ATP contacts are provided by residues D164 to K166, R230 to F231, D239, R245 to K246, A262, and K266. D239 lines the L-methionine pocket. K270 is an L-methionine binding site.

This sequence belongs to the AdoMet synthase family. As to quaternary structure, homotetramer; dimer of dimers. It depends on Mg(2+) as a cofactor. Requires K(+) as cofactor.

The protein resides in the cytoplasm. The enzyme catalyses L-methionine + ATP + H2O = S-adenosyl-L-methionine + phosphate + diphosphate. The protein operates within amino-acid biosynthesis; S-adenosyl-L-methionine biosynthesis; S-adenosyl-L-methionine from L-methionine: step 1/1. Its function is as follows. Catalyzes the formation of S-adenosylmethionine (AdoMet) from methionine and ATP. The overall synthetic reaction is composed of two sequential steps, AdoMet formation and the subsequent tripolyphosphate hydrolysis which occurs prior to release of AdoMet from the enzyme. This is S-adenosylmethionine synthase from Aliivibrio salmonicida (strain LFI1238) (Vibrio salmonicida (strain LFI1238)).